A 209-amino-acid polypeptide reads, in one-letter code: Uracil phosphoribosyltransferase (209 aa).

5-phospho-alpha-D-ribose 1-diphosphate contacts are provided by residues R79, R104, and 131–139 (DPMLATGGS). Uracil-binding positions include I194 and 199–201 (GDA). D200 is a 5-phospho-alpha-D-ribose 1-diphosphate binding site.

It belongs to the UPRTase family. Mg(2+) is required as a cofactor.

The enzyme catalyses UMP + diphosphate = 5-phospho-alpha-D-ribose 1-diphosphate + uracil. It participates in pyrimidine metabolism; UMP biosynthesis via salvage pathway; UMP from uracil: step 1/1. Allosterically activated by GTP. Its function is as follows. Catalyzes the conversion of uracil and 5-phospho-alpha-D-ribose 1-diphosphate (PRPP) to UMP and diphosphate. The polypeptide is Uracil phosphoribosyltransferase (Pediococcus pentosaceus (strain ATCC 25745 / CCUG 21536 / LMG 10740 / 183-1w)).